The chain runs to 491 residues: Probable CtpA-like serine protease (491 aa).

The interval 1 to 22 is disordered; that stretch reads MSESKDTTEVNQEVNEKASSQS. Positions 9–22 are enriched in polar residues; sequence EVNQEVNEKASSQS. The helical transmembrane segment at 34-54 threads the bilayer; that stretch reads FIIILIVTILVTAMIAVFATI. The region spanning 119 to 201 is the PDZ domain; it reads TKSFNEDVSG…TKVTLTIERG (83 aa). Catalysis depends on charge relay system residues Ser-324, Asp-335, and Lys-349.

The protein belongs to the peptidase S41A family.

It localises to the cell membrane. In Staphylococcus saprophyticus subsp. saprophyticus (strain ATCC 15305 / DSM 20229 / NCIMB 8711 / NCTC 7292 / S-41), this protein is Probable CtpA-like serine protease.